A 171-amino-acid chain; its full sequence is Protein hunchback (171 aa).

Disordered stretches follow at residues 14-93 (PMSH…PMQI) and 124-171 (SNDK…KYMA). Positions 17–31 (HHHHHSHHSHGHHHS) are enriched in basic residues. Composition is skewed to low complexity over residues 32–42 (NSNSNASSPRQ) and 52–80 (SSSN…DTPL). Basic and acidic residues predominate over residues 152-171 (EPEKDHDLMSNSSEDMKYMA).

Belongs to the hunchback C2H2-type zinc-finger protein family.

Its subcellular location is the nucleus. In terms of biological role, gap class segmentation protein that controls development of head structures. In Scaptomyza albovittata (Fruit fly), this protein is Protein hunchback (hb).